Here is a 432-residue protein sequence, read N- to C-terminus: Trigger factor (432 aa).

A PPIase FKBP-type domain is found at 161–246 (DDRVTIDFVG…LKKVENMVLP (86 aa)).

It belongs to the FKBP-type PPIase family. Tig subfamily.

The protein localises to the cytoplasm. It carries out the reaction [protein]-peptidylproline (omega=180) = [protein]-peptidylproline (omega=0). Involved in protein export. Acts as a chaperone by maintaining the newly synthesized protein in an open conformation. Functions as a peptidyl-prolyl cis-trans isomerase. This is Trigger factor from Haemophilus influenzae (strain PittGG).